The primary structure comprises 78 residues: Small ribosomal subunit protein bS18 (78 aa).

Belongs to the bacterial ribosomal protein bS18 family. In terms of assembly, part of the 30S ribosomal subunit. Forms a tight heterodimer with protein bS6.

Functionally, binds as a heterodimer with protein bS6 to the central domain of the 16S rRNA, where it helps stabilize the platform of the 30S subunit. This chain is Small ribosomal subunit protein bS18, found in Pseudothermotoga lettingae (strain ATCC BAA-301 / DSM 14385 / NBRC 107922 / TMO) (Thermotoga lettingae).